The sequence spans 60 residues: Mastoparan-VT6 (60 aa).

Positions 1–27 are cleaved as a signal peptide; sequence MKNTILILFTAFIALLGFFGMSAEALA. 4 AXPX repeats span residues 27–30, 31–34, 35–38, and 41–44; these read ADPK, ADPL, AGPN, and ADPE. Residues 28-45 constitute a propeptide that is removed on maturation; it reads DPKADPLAGPNPDADPEA. Leucine amide is present on leucine 59.

It belongs to the MCD family. Mastoparan subfamily. In terms of tissue distribution, expressed by the venom gland.

The protein resides in the secreted. Functionally, the synthetic peptide shows antimicrobial activities against Gram-negative bacteria (but not against all strains tested), Gram-positive bacteria (all strains tested) and the fungi C.albicans and C.parapsilosis. Exhibits little hemolytic activity against washed human erythrocytes. The polypeptide is Mastoparan-VT6 (Vespa tropica (Greater banded hornet)).